A 151-amino-acid chain; its full sequence is UPF0208 membrane protein YPDSF_1972 (151 aa).

2 helical membrane-spanning segments follow: residues 46–66 (FGIR…IALG) and 69–89 (LGPA…GLWW).

The protein belongs to the UPF0208 family.

The protein resides in the cell inner membrane. In Yersinia pestis (strain Pestoides F), this protein is UPF0208 membrane protein YPDSF_1972.